A 427-amino-acid polypeptide reads, in one-letter code: Gustatory receptor for sugar taste 43a (427 aa).

Over 1 to 37 (MEISQPSIGIFYISKVLALAPYATVRNSKGRVEIGRS) the chain is Cytoplasmic. A helical membrane pass occupies residues 38 to 63 (WLFTVYSATLTVVMVFLTYRGLLFDA). Topologically, residues 64–75 (NSEIPVRMKSAT) are extracellular. Arginine 70 and aspartate 83 together coordinate beta-D-fructose. A helical transmembrane segment spans residues 76 to 96 (SKVVTALDVSVVVMAIVSGVY). The Cytoplasmic portion of the chain corresponds to 97–135 (CGLFSLNDTLELNDRLNKIDNTLNAYNNFRRDRWRALGM). The chain crosses the membrane as a helical span at residues 136 to 158 (AAVSLLAISILVGLDVGTWMRIA). The Extracellular portion of the chain corresponds to 159-168 (QDMNIAQSDT). Residues 169-193 (ELNVHWYIPFYSLYFILTGLQVNIA) traverse the membrane as a helical segment. Tyrosine 182 is a binding site for beta-D-fructose. Residues 194 to 293 (NTAYGLGRRF…CVHLLSNSFG (100 aa)) lie on the Cytoplasmic side of the membrane. The helical transmembrane segment at 294–316 (IAVLFILVSCLLHLVATAYFLFL) threads the bilayer. Position 310 (threonine 310) interacts with beta-D-fructose. At 317–324 (ELLSKRDN) the chain is on the extracellular side. The chain crosses the membrane as a helical span at residues 325 to 346 (GYLWVQMLWICFHFLRLLMVVE). Histidine 337 contacts beta-D-fructose. The Cytoplasmic portion of the chain corresponds to 347 to 402 (PCHLAARESRKTIQIVCEIERKVHEPILAEAVKKFWQQLLVVDADFSACGLCRVNR). A helical membrane pass occupies residues 403–423 (TILTSFASAIATYLVILIQFQ). Glutamine 421 serves as a coordination point for Ca(2+). The Extracellular segment spans residues 424–427 (RTNG).

This sequence belongs to the insect chemoreceptor superfamily. Gustatory receptor (GR) family. Gr21a subfamily. Homotetramer. As to expression, expressed in the adult labellar chemosensory neurons and in the adult head, abdomen, leg and wing. In larvae, is expressed in taste organs, as well as the brain and the gastrointestinal system.

It is found in the cell membrane. Gustatory receptor which mediates acceptance or avoidance behavior, depending on its substrates. Gr43a is the main sugar receptor in larvae. Functions as a narrowly tuned fructose receptor in taste neurons but also as a fructose receptor in the brain. Necessary and sufficient to sense hemolymph fructose and promote feeding in hungry flies but suppress feeding in satiated flies. The protein is Gustatory receptor for sugar taste 43a (Gr43a) of Drosophila melanogaster (Fruit fly).